A 32-amino-acid polypeptide reads, in one-letter code: MGKEIVESAILSSVLVLVGLAVGFLLLKVQGE.

A helical membrane pass occupies residues 9–29 (AILSSVLVLVGLAVGFLLLKV).

It belongs to the PetM family. In terms of assembly, the 4 large subunits of the cytochrome b6-f complex are cytochrome b6, subunit IV (17 kDa polypeptide, PetD), cytochrome f and the Rieske protein, while the 4 small subunits are PetG, PetL, PetM and PetN. The complex functions as a dimer.

The protein resides in the plastid. It is found in the chloroplast thylakoid membrane. Functionally, component of the cytochrome b6-f complex, which mediates electron transfer between photosystem II (PSII) and photosystem I (PSI), cyclic electron flow around PSI, and state transitions. In Porphyra purpurea (Red seaweed), this protein is Cytochrome b6-f complex subunit 7.